Reading from the N-terminus, the 142-residue chain is MSKNVVIAEQEKNNEHCPEDINDKLSESTDDDGEDTSDEDKEEDSNPNKDTHAPLELMTEFLRAEMGHDYHLAKKLCQMILIYEPENPEAKEFFSLIEEMLLMEKAQNLEEDDDESEEDNSESEGESTEDPSEESSDECEDG.

Disordered regions lie at residues 1–55 (MSKN…HAPL) and 104–142 (EKAQNLEEDDDESEEDNSESEGESTEDPSEESSDECEDG). Positions 9 to 27 (EQEKNNEHCPEDINDKLSE) are enriched in basic and acidic residues. Acidic residues predominate over residues 28-43 (STDDDGEDTSDEDKEE). Residues 44-53 (DSNPNKDTHA) show a composition bias toward basic and acidic residues. Acidic residues predominate over residues 109-142 (LEEDDDESEEDNSESEGESTEDPSEESSDECEDG).

The chain is Glutamate-rich protein 2 (ERICH2) from Bos taurus (Bovine).